Consider the following 217-residue polypeptide: ATP-dependent Clp protease proteolytic subunit (217 aa).

The Nucleophile role is filled by S121. Residue H146 is part of the active site.

This sequence belongs to the peptidase S14 family. Fourteen ClpP subunits assemble into 2 heptameric rings which stack back to back to give a disk-like structure with a central cavity, resembling the structure of eukaryotic proteasomes.

It is found in the cytoplasm. It catalyses the reaction Hydrolysis of proteins to small peptides in the presence of ATP and magnesium. alpha-casein is the usual test substrate. In the absence of ATP, only oligopeptides shorter than five residues are hydrolyzed (such as succinyl-Leu-Tyr-|-NHMec, and Leu-Tyr-Leu-|-Tyr-Trp, in which cleavage of the -Tyr-|-Leu- and -Tyr-|-Trp bonds also occurs).. In terms of biological role, cleaves peptides in various proteins in a process that requires ATP hydrolysis. Has a chymotrypsin-like activity. Plays a major role in the degradation of misfolded proteins. In Burkholderia cenocepacia (strain HI2424), this protein is ATP-dependent Clp protease proteolytic subunit.